The chain runs to 79 residues: Protein RALF-like 35 (79 aa).

Residues 1–29 (MAAHKMSLTSLFFVSIVIVLSLFSGFGEG) form the signal peptide. 2 disulfide bridges follow: Cys45-Cys52 and Cys66-Cys72. Asn68 carries an N-linked (GlcNAc...) asparagine glycan.

It belongs to the plant rapid alkalinization factor (RALF) family.

It localises to the secreted. Its function is as follows. Cell signaling peptide that may regulate plant stress, growth, and development. Mediates a rapid alkalinization of extracellular space by mediating a transient increase in the cytoplasmic Ca(2+) concentration leading to a calcium-dependent signaling events through a cell surface receptor and a concomitant activation of some intracellular mitogen-activated protein kinases. The chain is Protein RALF-like 35 from Arabidopsis thaliana (Mouse-ear cress).